Reading from the N-terminus, the 84-residue chain is Small ribosomal subunit protein bS16c (84 aa).

This sequence belongs to the bacterial ribosomal protein bS16 family.

It is found in the plastid. Its subcellular location is the chloroplast. This is Small ribosomal subunit protein bS16c from Anthoceros angustus (Hornwort).